The chain runs to 73 residues: UPF0499 protein NFIA_054990 (73 aa).

An N-terminal signal peptide occupies residues 1-20 (MKSFNLLSLSLLLAIASAAA). Intrachain disulfides connect Cys46/Cys60, Cys50/Cys63, and Cys56/Cys70.

It belongs to the UPF0499 family.

Its subcellular location is the secreted. The polypeptide is UPF0499 protein NFIA_054990 (Neosartorya fischeri (strain ATCC 1020 / DSM 3700 / CBS 544.65 / FGSC A1164 / JCM 1740 / NRRL 181 / WB 181) (Aspergillus fischerianus)).